A 133-amino-acid polypeptide reads, in one-letter code: Putative biopolymer transport protein ExbD-like 1 (133 aa).

Residues 1–15 (MNYDNYWDEDKPELN) lie on the Cytoplasmic side of the membrane. A helical membrane pass occupies residues 16–32 (ITPLVDVMLVLLAILMV). The Periplasmic portion of the chain corresponds to 33–133 (TTPTLTYKEE…FLKVSLITSP (101 aa)).

It belongs to the ExbD/TolR family.

Its subcellular location is the cell inner membrane. This is Putative biopolymer transport protein ExbD-like 1 from Helicobacter pylori (strain J99 / ATCC 700824) (Campylobacter pylori J99).